A 1282-amino-acid chain; its full sequence is Crescerin-like protein che-12 (1282 aa).

2 TOG regions span residues 33 to 240 and 268 to 515; these read DFDT…EHTE and PSLV…MDSF. 8 HEAT repeats span residues 59–96, 100–137, 162–209, 261–300, 308–345, 349–386, 388–421, and 424–461; these read QKKG…TFGS, YCMC…LKPE, ELHH…FIGN, RLRF…QITP, PHLH…HLKG, AHIQ…NINP, TVGG…TISP, and FNLQ…LLNG. A disordered region spans residues 566–714; sequence IQQQGQAEKP…RSFDDRPAKA (149 aa). Low complexity-rich tracts occupy residues 575-592 and 633-644; these read PSFS…HQAQ and SAASNPNSSTSS. A compositionally biased stretch (basic and acidic residues) spans 702 to 712; that stretch reads DPPRSFDDRPA. TOG stretches follow at residues 800–1022 and 1066–1282; these read NMSV…ANVE and TELL…ALIR. HEAT repeat units lie at residues 838-875, 879-917, 919-953, 961-998, 1095-1132, 1177-1214, and 1219-1258; these read DNLK…NLNS, SEME…AATA, KALQ…IQGS, NALS…DPNF, ASDT…SMAK, IEPV…LAYK, and QVEV…LIGE.

This sequence belongs to the Crescerin family. Detected in a subset of amphid neurons that lack wing- or finger-like ciliary extensions. Likewise, detected in phasmid neurons.

It is found in the cell projection. The protein resides in the cilium. The protein localises to the perikaryon. Its subcellular location is the dendrite. Its function is as follows. Required for normal structure and function of sensory cilia on amphid neurons, especially for the formation of distal ciliary structures, but is less important for normal assembly of middle and basal ciliary structures. Plays a role in the organization of axoneme microtubule bundles in sensory cilia. Required for normal structure and function of the ASER neuron that mediates attraction to NaCl. Required for normal chemotaxis to NaCl. Required for normal avoidance response to high osmolarity. In contrast, is not required for normal chemotaxis to isoamyl alcohol. Does not play a role in intraflagella transport (IFT). Promotes dauer formation in response to pheromones such as the ascarosides ascr#2, ascr#3, ascr#5, ascr#8 and icas#9. The chain is Crescerin-like protein che-12 from Caenorhabditis elegans.